Consider the following 431-residue polypeptide: Methionine aminopeptidase 2-2 (431 aa).

The tract at residues 1 to 76 (MAAQASEKLQ…PPRVPLSTLF (76 aa)) is disordered. Residues 35–47 (EAEDDSDDDEVED) are compositionally biased toward acidic residues. His184 contacts substrate. Residues Asp204, Asp215, and His284 each coordinate a divalent metal cation. Position 292 (His292) interacts with substrate. A divalent metal cation contacts are provided by Glu317 and Glu412.

Belongs to the peptidase M24A family. Methionine aminopeptidase eukaryotic type 2 subfamily. Requires Co(2+) as cofactor. Zn(2+) serves as cofactor. The cofactor is Mn(2+). It depends on Fe(2+) as a cofactor.

It localises to the cytoplasm. The enzyme catalyses Release of N-terminal amino acids, preferentially methionine, from peptides and arylamides.. In terms of biological role, cotranslationally removes the N-terminal methionine from nascent proteins. The N-terminal methionine is often cleaved when the second residue in the primary sequence is small and uncharged (Met-Ala-, Cys, Gly, Pro, Ser, Thr, or Val). The chain is Methionine aminopeptidase 2-2 from Aspergillus niger (strain ATCC MYA-4892 / CBS 513.88 / FGSC A1513).